The following is a 256-amino-acid chain: Cytochrome c-type biogenesis protein CcmE homolog, mitochondrial (256 aa).

The transit peptide at Met1–Leu57 directs the protein to the mitochondrion. Residues Leu84 to Gln106 traverse the membrane as a helical segment. Heme-binding residues include His222 and Tyr226.

It belongs to the CcmE/CycJ family.

Its subcellular location is the mitochondrion inner membrane. It localises to the mitochondrion intermembrane space. In terms of biological role, heme-binding chaperone that may be involved in cytochrome c maturation in mitochondria. The sequence is that of Cytochrome c-type biogenesis protein CcmE homolog, mitochondrial from Arabidopsis thaliana (Mouse-ear cress).